Here is a 659-residue protein sequence, read N- to C-terminus: Protein NEDD1 (659 aa).

WD repeat units follow at residues 1 to 31 (MQEN…FNPH), 32 to 71 (TAPH…PVPL), 75 to 114 (GEGQ…VHRS), 117 to 156 (DHKD…SSTP), 160 to 200 (GSNQ…PYHN), 204 to 244 (THKA…LVKT), 246 to 285 (VADA…SPIK), and 289 to 332 (AHKT…SAGG). Threonine 382 is modified (phosphothreonine; by PLK1). The tract at residues 383–433 (LSKEAESGKNQDFSNFDDSGKSSLGDMFSPVRDDAVVSKGGDESIGKGDGL) is disordered. Phosphoserine is present on serine 411. Basic and acidic residues predominate over residues 413 to 432 (VRDDAVVSKGGDESIGKGDG). Serine 426 bears the Phosphoserine; by PLK1 mark. Serine 468 and serine 515 each carry phosphoserine. The segment covering 508–522 (ETGNLNASPSSNQTR) has biased composition (polar residues). The interval 508 to 531 (ETGNLNASPSSNQTRSPEKFEKPE) is disordered. Threonine 549 bears the Phosphothreonine; by CDK1 mark. Serine 636 carries the post-translational modification Phosphoserine; by PLK1.

Interacts with FAM29A. Interacts with HSPA1A and HSPA1B. Interacts with gamma-tubulin in a HSPA1A/B-dependent manner. In terms of processing, during mitosis, prior phosphorylation on Thr-549 by CDK1 promotes subsequent phosphorylation by PLK1 on Thr-382, Ser-426 and Ser-636. Phosphorylated NEDD1 can interact with gamma-tubulin for targeting the gamma-tubulin ring complex (gTuRC) to the centrosome, an important step for spindle formation.

It is found in the cytoplasm. The protein localises to the cytoskeleton. The protein resides in the microtubule organizing center. Its subcellular location is the centrosome. Its function is as follows. Required for mitosis progression. Promotes the nucleation of microtubules from the spindle. In Bos taurus (Bovine), this protein is Protein NEDD1 (NEDD1).